Reading from the N-terminus, the 2299-residue chain is Protein Ycf2 (2299 aa).

Residue 1642 to 1649 coordinates ATP; sequence GSIGTGRS.

This sequence belongs to the Ycf2 family.

Its subcellular location is the plastid. It localises to the chloroplast stroma. In terms of biological role, probable ATPase of unknown function. Its presence in a non-photosynthetic plant (Epifagus virginiana) and experiments in tobacco indicate that it has an essential function which is probably not related to photosynthesis. The chain is Protein Ycf2 from Nandina domestica (Heavenly bamboo).